The following is an 860-amino-acid chain: Pentatricopeptide repeat-containing protein At1g18900 (860 aa).

PPR repeat units follow at residues 363–397 (DGHTYTTMVGNLGRAKQFGAINKLLDEMVRDGCQP), 398–432 (NTVTYNRLIHSYGRANYLNEAMNVFNQMQEAGCKP), 433–467 (DRVTYCTLIDIHAKAGFLDIAMDMYQRMQAGGLSP), 468–502 (DTFTYSVIINCLGKAGHLPAAHKLFCEMVDQGCTP), 503–537 (NLVTYNIMMDLHAKARNYQNALKLYRDMQNAGFEP), 538–572 (DKVTYSIVMEVLGHCGYLEEAEAVFTEMQQKNWIP), 573–607 (DEPVYGLLVDLWGKAGNVEKAWQWYQAMLHAGLRP), and 608–642 (NVPTCNSLLSTFLRVNKIAEAYELLQNMLALGLRP). A Smr domain is found at 760–843 (INLHVMSEGT…NSGCFVGSGE (84 aa)).

The protein belongs to the PPR family. P subfamily.

This chain is Pentatricopeptide repeat-containing protein At1g18900, found in Arabidopsis thaliana (Mouse-ear cress).